A 472-amino-acid polypeptide reads, in one-letter code: Glutamate--tRNA ligase (472 aa).

Residues 7–17 carry the 'HIGH' region motif; it reads PSPTGFLHVGG. 4 residues coordinate Zn(2+): cysteine 96, cysteine 98, cysteine 123, and histidine 125. A compositionally biased stretch (basic and acidic residues) spans 112 to 129; sequence ARKEKPRYDGRCRHRSEP. The segment at 112-134 is disordered; it reads ARKEKPRYDGRCRHRSEPPSDQP. The short motif at 234 to 238 is the 'KMSKS' region element; that stretch reads KLSKR. Lysine 237 lines the ATP pocket.

This sequence belongs to the class-I aminoacyl-tRNA synthetase family. Glutamate--tRNA ligase type 1 subfamily. Monomer. Requires Zn(2+) as cofactor.

It localises to the cytoplasm. The catalysed reaction is tRNA(Glu) + L-glutamate + ATP = L-glutamyl-tRNA(Glu) + AMP + diphosphate. In terms of biological role, catalyzes the attachment of glutamate to tRNA(Glu) in a two-step reaction: glutamate is first activated by ATP to form Glu-AMP and then transferred to the acceptor end of tRNA(Glu). The protein is Glutamate--tRNA ligase of Magnetococcus marinus (strain ATCC BAA-1437 / JCM 17883 / MC-1).